We begin with the raw amino-acid sequence, 187 residues long: Elongation factor P (187 aa).

This sequence belongs to the elongation factor P family.

It is found in the cytoplasm. Its pathway is protein biosynthesis; polypeptide chain elongation. Its function is as follows. Involved in peptide bond synthesis. Stimulates efficient translation and peptide-bond synthesis on native or reconstituted 70S ribosomes in vitro. Probably functions indirectly by altering the affinity of the ribosome for aminoacyl-tRNA, thus increasing their reactivity as acceptors for peptidyl transferase. The sequence is that of Elongation factor P from Magnetococcus marinus (strain ATCC BAA-1437 / JCM 17883 / MC-1).